A 243-amino-acid chain; its full sequence is Probable phosphatase CLD_1129 (243 aa).

Histidine 8, histidine 10, histidine 16, histidine 41, glutamate 74, histidine 102, histidine 132, aspartate 192, and histidine 194 together coordinate Zn(2+).

This sequence belongs to the PHP family. Requires Zn(2+) as cofactor.

The sequence is that of Probable phosphatase CLD_1129 from Clostridium botulinum (strain Okra / Type B1).